The primary structure comprises 428 residues: GTPase HflX (428 aa).

One can recognise a Hflx-type G domain in the interval 214 to 374 (PVVAIVGYTN…AIERELFKET (161 aa)). Residues 220 to 227 (GYTNAGKS), 245 to 249 (FATLD), 267 to 270 (DTVG), 333 to 336 (NKID), and 352 to 354 (SAK) contribute to the GTP site. Mg(2+) contacts are provided by serine 227 and threonine 247.

This sequence belongs to the TRAFAC class OBG-HflX-like GTPase superfamily. HflX GTPase family. As to quaternary structure, monomer. Associates with the 50S ribosomal subunit. It depends on Mg(2+) as a cofactor.

It is found in the cytoplasm. Its function is as follows. GTPase that associates with the 50S ribosomal subunit and may have a role during protein synthesis or ribosome biogenesis. This is GTPase HflX from Caldanaerobacter subterraneus subsp. tengcongensis (strain DSM 15242 / JCM 11007 / NBRC 100824 / MB4) (Thermoanaerobacter tengcongensis).